A 28-amino-acid chain; its full sequence is trp operon leader peptide (28 aa).

In terms of biological role, this protein is involved in control of the biosynthesis of tryptophan. In Serratia marcescens, this protein is trp operon leader peptide (trpL).